Here is a 121-residue protein sequence, read N- to C-terminus: Cytochrome B5-like protein (121 aa).

The helical transmembrane segment at 1–21 (MIAVIGLLLGFLVSALFLIQG) threads the bilayer. Positions 24-49 (RRTNDNQEKKRSSSEPVEDVVRPKSY) are disordered. Residues 26-36 (TNDNQEKKRSS) are compositionally biased toward basic and acidic residues. One can recognise a Cytochrome b5 heme-binding domain in the interval 46 to 121 (PKSYSKSEVA…IEDFYIGELH (76 aa)). Heme-binding residues include H81 and H104.

Belongs to the cytochrome b5 family.

The protein resides in the membrane. This chain is Cytochrome B5-like protein, found in Arabidopsis thaliana (Mouse-ear cress).